The chain runs to 403 residues: Putative gustatory receptor 98b (403 aa).

Topologically, residues M1–R11 are cytoplasmic. The helical transmembrane segment at A12–G32 threads the bilayer. Over H33–V48 the chain is Extracellular. A helical membrane pass occupies residues F49–I69. Residues D70–R83 are Cytoplasmic-facing. Residues V84–M104 form a helical membrane-spanning segment. Over L105–R144 the chain is Extracellular. A helical transmembrane segment spans residues M145–M165. At T166–S191 the chain is on the cytoplasmic side. The helical transmembrane segment at L192–L212 threads the bilayer. Residues S213–T259 are Extracellular-facing. The chain crosses the membrane as a helical span at residues M260–I280. Over N281–D365 the chain is Cytoplasmic. The chain crosses the membrane as a helical span at residues I366–I386. Topologically, residues Q387–N403 are extracellular.

This sequence belongs to the insect chemoreceptor superfamily. Gustatory receptor (GR) family. Gr2a subfamily.

The protein localises to the cell membrane. Probable gustatory receptor which mediates acceptance or avoidance behavior, depending on its substrates. The polypeptide is Putative gustatory receptor 98b (Gr98b) (Drosophila melanogaster (Fruit fly)).